A 161-amino-acid chain; its full sequence is Nucleotide-binding protein Sama_2557 (161 aa).

Belongs to the YajQ family.

Nucleotide-binding protein. The chain is Nucleotide-binding protein Sama_2557 from Shewanella amazonensis (strain ATCC BAA-1098 / SB2B).